We begin with the raw amino-acid sequence, 439 residues long: IAA-amino acid hydrolase ILR1-like 2 (439 aa).

The signal sequence occupies residues 1 to 21; sequence MALNKLLSLTFQLLLFLLSVS. The Mn(2+) site is built by C137, H139, E173, H197, and H397. A Prevents secretion from ER motif is present at residues 436–439; it reads HEEL.

This sequence belongs to the peptidase M20 family. In terms of assembly, monomer. Requires Mn(2+) as cofactor. In terms of tissue distribution, expressed in leaves, stems, siliques, seeds and flowers. Detected in the distal tips of cotyledons and seedling leaves, hydathodes of leaves from mature plants, pollen, ovules and developing seeds.

Its subcellular location is the endoplasmic reticulum lumen. Hydrolyzes certain amino acid conjugates of the plant growth regulator indole-3-acetic acid (IAA), including IAA-Ala, IAA-Leu, IAA-Met, IAA-Phe, IAA-Ser, IAA-Thr, IAA-Tyr and IAA-Val. Is the most efficient enzyme of the ILL family for IAA-Ala. Not important for IAA-Leu hydrolysis in roots. May act with ILR1 to provide free IAA to germinating seedlings. The protein is IAA-amino acid hydrolase ILR1-like 2 of Arabidopsis thaliana (Mouse-ear cress).